A 159-amino-acid polypeptide reads, in one-letter code: NAD(P)H-quinone oxidoreductase subunit N (159 aa).

It belongs to the complex I NdhN subunit family. As to quaternary structure, NDH-1 can be composed of about 15 different subunits; different subcomplexes with different compositions have been identified which probably have different functions.

The protein localises to the cell inner membrane. It carries out the reaction a plastoquinone + NADH + (n+1) H(+)(in) = a plastoquinol + NAD(+) + n H(+)(out). The enzyme catalyses a plastoquinone + NADPH + (n+1) H(+)(in) = a plastoquinol + NADP(+) + n H(+)(out). Its function is as follows. NDH-1 shuttles electrons from an unknown electron donor, via FMN and iron-sulfur (Fe-S) centers, to quinones in the respiratory and/or the photosynthetic chain. The immediate electron acceptor for the enzyme in this species is believed to be plastoquinone. Couples the redox reaction to proton translocation, and thus conserves the redox energy in a proton gradient. Cyanobacterial NDH-1 also plays a role in inorganic carbon-concentration. In Gloeobacter violaceus (strain ATCC 29082 / PCC 7421), this protein is NAD(P)H-quinone oxidoreductase subunit N.